We begin with the raw amino-acid sequence, 509 residues long: Ethanolamine-phosphate phospho-lyase (509 aa).

Lysine 279 carries the N6-(pyridoxal phosphate)lysine modification. Over residues 451 to 474 (EKTSAKRKVHNENSGDTNAKEKET) the composition is skewed to basic and acidic residues. The interval 451 to 509 (EKTSAKRKVHNENSGDTNAKEKETCSSNSQERNPNDHAYRQSNGLHPESPTFTRKRIRT) is disordered.

Belongs to the class-III pyridoxal-phosphate-dependent aminotransferase family. In terms of assembly, homotetramer. It depends on pyridoxal 5'-phosphate as a cofactor.

The protein resides in the mitochondrion. It catalyses the reaction phosphoethanolamine + H2O = acetaldehyde + NH4(+) + phosphate. Its function is as follows. Catalyzes the pyridoxal-phosphate-dependent breakdown of phosphoethanolamine, converting it to ammonia, inorganic phosphate and acetaldehyde. The sequence is that of Ethanolamine-phosphate phospho-lyase (etnppl) from Xenopus laevis (African clawed frog).